We begin with the raw amino-acid sequence, 144 residues long: D-aminoacyl-tRNA deacylase (144 aa).

A Gly-cisPro motif, important for rejection of L-amino acids motif is present at residues 136-137 (GP).

This sequence belongs to the DTD family. Homodimer.

It localises to the cytoplasm. The catalysed reaction is glycyl-tRNA(Ala) + H2O = tRNA(Ala) + glycine + H(+). It catalyses the reaction a D-aminoacyl-tRNA + H2O = a tRNA + a D-alpha-amino acid + H(+). An aminoacyl-tRNA editing enzyme that deacylates mischarged D-aminoacyl-tRNAs. Also deacylates mischarged glycyl-tRNA(Ala), protecting cells against glycine mischarging by AlaRS. Acts via tRNA-based rather than protein-based catalysis; rejects L-amino acids rather than detecting D-amino acids in the active site. By recycling D-aminoacyl-tRNA to D-amino acids and free tRNA molecules, this enzyme counteracts the toxicity associated with the formation of D-aminoacyl-tRNA entities in vivo and helps enforce protein L-homochirality. This Aliivibrio salmonicida (strain LFI1238) (Vibrio salmonicida (strain LFI1238)) protein is D-aminoacyl-tRNA deacylase.